Here is a 457-residue protein sequence, read N- to C-terminus: Carboxypeptidase N catalytic chain (457 aa).

The signal sequence occupies residues 1–23 (MPDLPSAFLPLLLLSKFVTPVTF). One can recognise a Peptidase M14 domain in the interval 24–338 (RHHRYDDLVR…EALIQFLEQV (315 aa)). A disulfide bridge links C42 with C104. Zn(2+)-binding residues include H86, E89, and H216. C271 and C311 are oxidised to a cystine. The active-site Proton donor/acceptor is E308. O-linked (GalNAc...) threonine glycans are attached at residues T400, T402, and T409. Residues 418-457 (STTQVHPVQKAPGRGQGSRAKQPRTSRKKDQAAKRHRGPA) are disordered.

Belongs to the peptidase M14 family. As to quaternary structure, tetramer of two catalytic chains and two glycosylated inactive chains. It depends on Zn(2+) as a cofactor. Plasma. Expressed in liver.

The protein resides in the secreted. Its subcellular location is the extracellular space. It carries out the reaction Release of a C-terminal basic amino acid, preferentially lysine.. In terms of biological role, protects the body from potent vasoactive and inflammatory peptides containing C-terminal Arg or Lys (such as kinins or anaphylatoxins) which are released into the circulation. In Rattus norvegicus (Rat), this protein is Carboxypeptidase N catalytic chain (Cpn1).